Here is a 437-residue protein sequence, read N- to C-terminus: Enolase 2 (437 aa).

Residue Gln-162 participates in (2R)-2-phosphoglycerate binding. Glu-204 functions as the Proton donor in the catalytic mechanism. Mg(2+) contacts are provided by Asp-251, Glu-297, and Asp-324. The (2R)-2-phosphoglycerate site is built by Lys-349, Arg-378, Ser-379, and Lys-400. The Proton acceptor role is filled by Lys-349.

Belongs to the enolase family. Requires Mg(2+) as cofactor.

The protein localises to the cytoplasm. It localises to the secreted. The protein resides in the cell surface. The catalysed reaction is (2R)-2-phosphoglycerate = phosphoenolpyruvate + H2O. The protein operates within carbohydrate degradation; glycolysis; pyruvate from D-glyceraldehyde 3-phosphate: step 4/5. In terms of biological role, catalyzes the reversible conversion of 2-phosphoglycerate (2-PG) into phosphoenolpyruvate (PEP). It is essential for the degradation of carbohydrates via glycolysis. In Chlorobaculum tepidum (strain ATCC 49652 / DSM 12025 / NBRC 103806 / TLS) (Chlorobium tepidum), this protein is Enolase 2.